The primary structure comprises 350 residues: MANYLRWTVGQAQALFEKPLLDLLFEAQQIHRQHFDPRQVQVSTLLSIKTGACPEDCKYCPQSSRYKTGLESERLMQVEQVLESAKKAKAAGSTRFCMGAAWKNPHERDMPYLEKMVEGVKAMGMETCMTLGTLDKQQAHRLADAGLDYYNHNLDTSPEFYGSIITTRSYQERLDTLSEVRDAGIKVCSGGIVGLGETVRDRAGLLVQLANLPKPPESVPINMLVKVKGTPLENNDDVDAFEFIRTIAVARIMMPTSYVRLSAGREQMNEQTQAMCFMAGANSIFYGCKLLTTPNPEEDKDLQLFRKLGLNPQQTATQHGDRAQQQVLTEQLLHSDSLPEDSVQFYNAAH.

A Radical SAM core domain is found at 38 to 262 (RQVQVSTLLS…MMPTSYVRLS (225 aa)). Positions 53, 57, and 60 each coordinate [4Fe-4S] cluster. The [2Fe-2S] cluster site is built by C97, C128, C188, and R260.

This sequence belongs to the radical SAM superfamily. Biotin synthase family. In terms of assembly, homodimer. [4Fe-4S] cluster is required as a cofactor. Requires [2Fe-2S] cluster as cofactor.

The catalysed reaction is (4R,5S)-dethiobiotin + (sulfur carrier)-SH + 2 reduced [2Fe-2S]-[ferredoxin] + 2 S-adenosyl-L-methionine = (sulfur carrier)-H + biotin + 2 5'-deoxyadenosine + 2 L-methionine + 2 oxidized [2Fe-2S]-[ferredoxin]. The protein operates within cofactor biosynthesis; biotin biosynthesis; biotin from 7,8-diaminononanoate: step 2/2. Its function is as follows. Catalyzes the conversion of dethiobiotin (DTB) to biotin by the insertion of a sulfur atom into dethiobiotin via a radical-based mechanism. The sequence is that of Biotin synthase from Yersinia enterocolitica serotype O:8 / biotype 1B (strain NCTC 13174 / 8081).